The sequence spans 325 residues: Transaldolase (325 aa).

Lys-125 (schiff-base intermediate with substrate) is an active-site residue.

Belongs to the transaldolase family. Type 2 subfamily.

The protein resides in the cytoplasm. The catalysed reaction is D-sedoheptulose 7-phosphate + D-glyceraldehyde 3-phosphate = D-erythrose 4-phosphate + beta-D-fructose 6-phosphate. Its pathway is carbohydrate degradation; pentose phosphate pathway; D-glyceraldehyde 3-phosphate and beta-D-fructose 6-phosphate from D-ribose 5-phosphate and D-xylulose 5-phosphate (non-oxidative stage): step 2/3. Functionally, transaldolase is important for the balance of metabolites in the pentose-phosphate pathway. This Campylobacter jejuni subsp. jejuni serotype O:2 (strain ATCC 700819 / NCTC 11168) protein is Transaldolase (tal).